The primary structure comprises 593 residues: Aspartate--tRNA(Asp/Asn) ligase (593 aa).

Glu173 lines the L-aspartate pocket. The segment at 197-200 is aspartate; that stretch reads QLFK. Arg219 contributes to the L-aspartate binding site. ATP contacts are provided by residues 219–221 and Gln228; that span reads RDE. His451 lines the L-aspartate pocket. Glu485 contacts ATP. Arg492 contributes to the L-aspartate binding site. 537–540 contacts ATP; it reads GIDR.

Belongs to the class-II aminoacyl-tRNA synthetase family. Type 1 subfamily. Homodimer.

The protein localises to the cytoplasm. It catalyses the reaction tRNA(Asx) + L-aspartate + ATP = L-aspartyl-tRNA(Asx) + AMP + diphosphate. Functionally, aspartyl-tRNA synthetase with relaxed tRNA specificity since it is able to aspartylate not only its cognate tRNA(Asp) but also tRNA(Asn). Reaction proceeds in two steps: L-aspartate is first activated by ATP to form Asp-AMP and then transferred to the acceptor end of tRNA(Asp/Asn). In Legionella pneumophila (strain Paris), this protein is Aspartate--tRNA(Asp/Asn) ligase.